The chain runs to 363 residues: Jasmonate-induced oxygenase 3 (363 aa).

Positions 210–312 (ESGGCLRVNY…RLSLAFFYNP (103 aa)) constitute a Fe2OG dioxygenase domain. Arg216 provides a ligand contact to jasmonate. Asn218 and Tyr220 together coordinate 2-oxoglutarate. Fe cation is bound by residues His235, Asp237, and His293. 2-oxoglutarate is bound by residues Arg303 and Ser305. Jasmonate contacts are provided by Arg342 and Arg346.

This sequence belongs to the iron/ascorbate-dependent oxidoreductase family. Requires L-ascorbate as cofactor. The cofactor is Fe(2+).

It catalyses the reaction jasmonate + 2-oxoglutarate + O2 = (1R,2R)-12-hydroxyjasmonate + succinate + CO2. Functionally, 2-oxoglutarate-dependent dioxygenase involved in the oxidation of jasmonate (JA), a stress-induced phytohormone synthesized in response to attack by pathogens and herbivores, which triggers the activation of defense responses via the JA-mediated signaling pathway. Converts JA to 12-hydroxyjasmonate (12OH-JA), an inactive form of JA. Is specific to free JA, and cannot oxidize the bioactive form jasmonoyl-L-isoleucine (JA-Ile) or other JA-amino acid conjugates. Prevents over-accumulation of JA and indirectly its bioactive form JA-Ile under stress response. Acts as a negative regulator of JA-mediated defense signaling, by contributing to 12OH-JA accumulation, which represses JA defense responses upon infection by the fungal pathogen Botrytis cinerea. Acts as a negative regulator of JA-mediated defense responses upon infestation by the herbivorous caterpillar Mamestra brassicae. The polypeptide is Jasmonate-induced oxygenase 3 (Arabidopsis thaliana (Mouse-ear cress)).